Consider the following 121-residue polypeptide: Large ribosomal subunit protein uL22 (121 aa).

Belongs to the universal ribosomal protein uL22 family. In terms of assembly, part of the 50S ribosomal subunit.

In terms of biological role, this protein binds specifically to 23S rRNA; its binding is stimulated by other ribosomal proteins, e.g. L4, L17, and L20. It is important during the early stages of 50S assembly. It makes multiple contacts with different domains of the 23S rRNA in the assembled 50S subunit and ribosome. Its function is as follows. The globular domain of the protein is located near the polypeptide exit tunnel on the outside of the subunit, while an extended beta-hairpin is found that lines the wall of the exit tunnel in the center of the 70S ribosome. In Salinibacter ruber (strain DSM 13855 / M31), this protein is Large ribosomal subunit protein uL22.